A 160-amino-acid polypeptide reads, in one-letter code: UPF0262 protein Mmar10_1128 (160 aa).

Belongs to the UPF0262 family.

This chain is UPF0262 protein Mmar10_1128, found in Maricaulis maris (strain MCS10) (Caulobacter maris).